A 108-amino-acid chain; its full sequence is Small ribosomal subunit protein uS10 (108 aa).

It belongs to the universal ribosomal protein uS10 family. As to quaternary structure, part of the 30S ribosomal subunit.

Functionally, involved in the binding of tRNA to the ribosomes. The chain is Small ribosomal subunit protein uS10 from Mycoplasma pneumoniae (strain ATCC 29342 / M129 / Subtype 1) (Mycoplasmoides pneumoniae).